The following is a 417-amino-acid chain: Serine--tRNA ligase (417 aa).

Residue 226 to 228 (TSE) coordinates L-serine. ATP is bound by residues 257–259 (RRE) and Val273. L-serine is bound at residue Glu280. Position 344-347 (344-347 (ELTS)) interacts with ATP. Thr379 serves as a coordination point for L-serine.

Belongs to the class-II aminoacyl-tRNA synthetase family. Type-1 seryl-tRNA synthetase subfamily. Homodimer. The tRNA molecule binds across the dimer.

Its subcellular location is the cytoplasm. The enzyme catalyses tRNA(Ser) + L-serine + ATP = L-seryl-tRNA(Ser) + AMP + diphosphate + H(+). It carries out the reaction tRNA(Sec) + L-serine + ATP = L-seryl-tRNA(Sec) + AMP + diphosphate + H(+). It functions in the pathway aminoacyl-tRNA biosynthesis; selenocysteinyl-tRNA(Sec) biosynthesis; L-seryl-tRNA(Sec) from L-serine and tRNA(Sec): step 1/1. Its function is as follows. Catalyzes the attachment of serine to tRNA(Ser). Is also able to aminoacylate tRNA(Sec) with serine, to form the misacylated tRNA L-seryl-tRNA(Sec), which will be further converted into selenocysteinyl-tRNA(Sec). The sequence is that of Serine--tRNA ligase from Mycobacterium sp. (strain KMS).